The following is a 1390-amino-acid chain: DNA-directed RNA polymerase subunit beta' (1390 aa).

Zn(2+) contacts are provided by C70, C72, C85, and C88. Mg(2+) is bound by residues D460, D462, and D464. Residues C814, C888, C895, and C898 each coordinate Zn(2+).

It belongs to the RNA polymerase beta' chain family. The RNAP catalytic core consists of 2 alpha, 1 beta, 1 beta' and 1 omega subunit. When a sigma factor is associated with the core the holoenzyme is formed, which can initiate transcription. Mg(2+) is required as a cofactor. Requires Zn(2+) as cofactor.

It carries out the reaction RNA(n) + a ribonucleoside 5'-triphosphate = RNA(n+1) + diphosphate. Its function is as follows. DNA-dependent RNA polymerase catalyzes the transcription of DNA into RNA using the four ribonucleoside triphosphates as substrates. In Pseudoalteromonas translucida (strain TAC 125), this protein is DNA-directed RNA polymerase subunit beta'.